The primary structure comprises 710 residues: Polyribonucleotide nucleotidyltransferase (710 aa).

2 residues coordinate Mg(2+): Asp487 and Asp493. Residues Pro554 to Ile613 enclose the KH domain. The S1 motif domain maps to Gly623–Lys691.

The protein belongs to the polyribonucleotide nucleotidyltransferase family. It depends on Mg(2+) as a cofactor.

It is found in the cytoplasm. The enzyme catalyses RNA(n+1) + phosphate = RNA(n) + a ribonucleoside 5'-diphosphate. In terms of biological role, involved in mRNA degradation. Catalyzes the phosphorolysis of single-stranded polyribonucleotides processively in the 3'- to 5'-direction. The sequence is that of Polyribonucleotide nucleotidyltransferase from Bacillus cytotoxicus (strain DSM 22905 / CIP 110041 / 391-98 / NVH 391-98).